The primary structure comprises 290 residues: MYFQDIISNLNNFWSEKGCLLLQPYDLEKGAGTMSPHSFLRAIGPEPWAVAYPEPCRRPTDGRYGDNPNRAQHYFQYQVLIKPSLDGIQEIYLSSLEALGISAKEHDIRFVEDNWESPTLGAWGVGWEVWLDGMEVTQFTYFQQCGGLDCKPVSIEITYGLERLAMYLQNVESIWDLSWNKKTKYGDIWLPFEKGQCKYNFEESNSENLRKLFEIYEEEAHQLIAKKLPAPCLDYVLKCSHTFNLLEARGVISVTERTKIIARIRSLARKVAEAWLEERGTLGFPLCAEN.

It belongs to the class-II aminoacyl-tRNA synthetase family. As to quaternary structure, tetramer of two alpha and two beta subunits.

It is found in the cytoplasm. It carries out the reaction tRNA(Gly) + glycine + ATP = glycyl-tRNA(Gly) + AMP + diphosphate. The chain is Glycine--tRNA ligase alpha subunit from Prochlorococcus marinus (strain NATL1A).